Consider the following 311-residue polypeptide: Olfactory receptor 5P3 (311 aa).

Over 1 to 25 (MGTGNDTTVVEFTLLGLSEDTTVCA) the chain is Extracellular. Asn-5 carries N-linked (GlcNAc...) asparagine glycosylation. The chain crosses the membrane as a helical span at residues 26–46 (ILFLVFLGIYVVTLMGNISII). At 47–54 (VLIRRSHH) the chain is on the cytoplasmic side. A helical membrane pass occupies residues 55-75 (LHTPMYIFLCHLAFVDIGYSS). Topologically, residues 76–99 (SVTPVMLMSFLRKETSLPVAGCVA) are extracellular. Cys-97 and Cys-189 are joined by a disulfide. A helical transmembrane segment spans residues 100–120 (QLCSVVTFGTAECFLLAAMAY). Over 121 to 139 (DRYVAICSPLLYSTCMSPG) the chain is Cytoplasmic. A helical membrane pass occupies residues 140–160 (VCIILVGMSYLGGCVNAWTFI). The Extracellular portion of the chain corresponds to 161-196 (GCLLRLSFCGPNKVNHFFCDYSPLLKLACSHDFTFE). The chain crosses the membrane as a helical span at residues 197–217 (IIPAISSGSIIVATVCVIAIS). The Cytoplasmic portion of the chain corresponds to 218-237 (YIYILITILKMHSTKGRHKA). Residues 238 to 258 (FSTCTSHLTAVTLFYGTITFI) traverse the membrane as a helical segment. The Extracellular segment spans residues 259–271 (YVMPKSSYSTDQN). A helical transmembrane segment spans residues 272-292 (KVVSVFYTVVIPMLNPLIYSL). Residues 293-311 (RNKEIKGALKRELRIKIFS) lie on the Cytoplasmic side of the membrane.

This sequence belongs to the G-protein coupled receptor 1 family. Expressed in the tongue.

The protein resides in the cell membrane. Functionally, odorant receptor (Potential). May be involved in taste perception. The chain is Olfactory receptor 5P3 (OR5P3) from Homo sapiens (Human).